The following is an 87-amino-acid chain: MAKGQSLQDPFLNALRRERIPVSIYLVNGIKLQGQIESFDQFVILLKNTVSQMVYKHAISTVVPARAVNHHQHVPGAAGEEQGEAEA.

In terms of domain architecture, Sm spans 9 to 68; the sequence is DPFLNALRRERIPVSIYLVNGIKLQGQIESFDQFVILLKNTVSQMVYKHAISTVVPARAV.

It belongs to the Hfq family. As to quaternary structure, homohexamer.

RNA chaperone that binds small regulatory RNA (sRNAs) and mRNAs to facilitate mRNA translational regulation in response to envelope stress, environmental stress and changes in metabolite concentrations. Also binds with high specificity to tRNAs. The polypeptide is RNA-binding protein Hfq (Aeromonas salmonicida (strain A449)).